The primary structure comprises 251 residues: Triosephosphate isomerase (251 aa).

Residue 9–11 (NWK) participates in substrate binding. H95 functions as the Electrophile in the catalytic mechanism. Catalysis depends on E167, which acts as the Proton acceptor. Residues G173, S212, and 233–234 (GG) contribute to the substrate site.

The protein belongs to the triosephosphate isomerase family. Homodimer.

The protein resides in the cytoplasm. The catalysed reaction is D-glyceraldehyde 3-phosphate = dihydroxyacetone phosphate. It participates in carbohydrate biosynthesis; gluconeogenesis. Its pathway is carbohydrate degradation; glycolysis; D-glyceraldehyde 3-phosphate from glycerone phosphate: step 1/1. Involved in the gluconeogenesis. Catalyzes stereospecifically the conversion of dihydroxyacetone phosphate (DHAP) to D-glyceraldehyde-3-phosphate (G3P). This chain is Triosephosphate isomerase, found in Ectopseudomonas mendocina (strain ymp) (Pseudomonas mendocina).